A 282-amino-acid chain; its full sequence is Pantothenate synthetase (282 aa).

Met31–His38 provides a ligand contact to ATP. His38 functions as the Proton donor in the catalytic mechanism. Gln62 is a binding site for (R)-pantoate. Gln62 is a beta-alanine binding site. Position 148–151 (Gly148–Asp151) interacts with ATP. A (R)-pantoate-binding site is contributed by Gln154. ATP-binding positions include Val177 and Lys185–Arg188.

Belongs to the pantothenate synthetase family. Homodimer.

Its subcellular location is the cytoplasm. It catalyses the reaction (R)-pantoate + beta-alanine + ATP = (R)-pantothenate + AMP + diphosphate + H(+). It functions in the pathway cofactor biosynthesis; (R)-pantothenate biosynthesis; (R)-pantothenate from (R)-pantoate and beta-alanine: step 1/1. Functionally, catalyzes the condensation of pantoate with beta-alanine in an ATP-dependent reaction via a pantoyl-adenylate intermediate. The protein is Pantothenate synthetase of Staphylococcus saprophyticus subsp. saprophyticus (strain ATCC 15305 / DSM 20229 / NCIMB 8711 / NCTC 7292 / S-41).